Reading from the N-terminus, the 318-residue chain is Protein-methionine-sulfoxide reductase catalytic subunit MsrP (318 aa).

A signal peptide (tat-type signal) is located at residues 1–40 (MNRFTRYDVTPEVIFNQRRQIIKAMGLGAAALSLPNIGFA). Mo-molybdopterin is bound by residues asparagine 72, 75–76 (YE), cysteine 130, threonine 165, asparagine 217, arginine 222, and 233–235 (SIK).

It belongs to the MsrP family. As to quaternary structure, heterodimer of a catalytic subunit (MsrP) and a heme-binding subunit (MsrQ). Mo-molybdopterin serves as cofactor. In terms of processing, predicted to be exported by the Tat system. The position of the signal peptide cleavage has not been experimentally proven.

The protein resides in the periplasm. It carries out the reaction L-methionyl-[protein] + a quinone + H2O = L-methionyl-(S)-S-oxide-[protein] + a quinol. The catalysed reaction is L-methionyl-[protein] + a quinone + H2O = L-methionyl-(R)-S-oxide-[protein] + a quinol. Part of the MsrPQ system that repairs oxidized periplasmic proteins containing methionine sulfoxide residues (Met-O), using respiratory chain electrons. Thus protects these proteins from oxidative-stress damage caused by reactive species of oxygen and chlorine generated by the host defense mechanisms. MsrPQ is essential for the maintenance of envelope integrity under bleach stress, rescuing a wide series of structurally unrelated periplasmic proteins from methionine oxidation. The catalytic subunit MsrP is non-stereospecific, being able to reduce both (R-) and (S-) diastereoisomers of methionine sulfoxide. The protein is Protein-methionine-sulfoxide reductase catalytic subunit MsrP of Actinobacillus pleuropneumoniae serotype 3 (strain JL03).